Consider the following 372-residue polypeptide: N-methyl-L-tryptophan oxidase (372 aa).

Position 4 to 34 (4 to 34 (DLIIIGSGSVGAAAGYYATRAGLNVLMTDAH)) interacts with FAD. Cys-308 carries the post-translational modification S-8alpha-FAD cysteine.

It belongs to the MSOX/MTOX family. MTOX subfamily. Monomer. It depends on FAD as a cofactor.

The enzyme catalyses N(alpha)-methyl-L-tryptophan + O2 + H2O = L-tryptophan + formaldehyde + H2O2. Functionally, catalyzes the oxidative demethylation of N-methyl-L-tryptophan. The polypeptide is N-methyl-L-tryptophan oxidase (Escherichia coli O6:H1 (strain CFT073 / ATCC 700928 / UPEC)).